Reading from the N-terminus, the 103-residue chain is Large ribosomal subunit protein bL21 (103 aa).

The protein belongs to the bacterial ribosomal protein bL21 family. As to quaternary structure, part of the 50S ribosomal subunit. Contacts protein L20.

In terms of biological role, this protein binds to 23S rRNA in the presence of protein L20. The protein is Large ribosomal subunit protein bL21 of Cupriavidus pinatubonensis (strain JMP 134 / LMG 1197) (Cupriavidus necator (strain JMP 134)).